The primary structure comprises 3957 residues: Ankyrin-2 (3957 aa).

Basic and acidic residues predominate over residues 1 to 14 (MMNEDAAQKSDSGE). The interval 1–34 (MMNEDAAQKSDSGEKFNGSSQRRKRPKKSDSNAS) is disordered. 24 ANK repeats span residues 30–62 (DSNASFLRAARAGNLDKVVEYLKGGIDINTCNQ), 63–92 (NGLNALHLAAKEGHVGLVQELLGRGSSVDS), 96–125 (KGNTALHIASLAGQAEVVKVLVKEGANINA), 129–158 (NGFTPLYMAAQENHIDVVKYLLENGANQST), 162–191 (DGFTPLAVALQQGHNQAVAILLENDTKGKV), 193–220 (LPALHIAARKDDTKSAALLLQNDHNADV), 232–261 (SGFTPLHIAAHYGNVNVATLLLNRGAAVDF), 265–294 (NGITPLHVASKRGNTNMVKLLLDRGGQIDA), 298–327 (DGLTPLHCAARSGHDQVVELLLERGAPLLA), 331–360 (NGLSPLHMAAQGDHVECVKHLLQHKAPVDD), 364–393 (DYLTALHVAAHCGHYRVTKLLLDKRANPNA), 397–426 (NGFTPLHIACKKNRIKVMELLVKYGASIQA), 430–459 (SGLTPIHVAAFMGHLNIVLLLLQNGASPDV), 463–492 (RGETALHMAARAGQVEVVRCLLRNGALVDA), 496–525 (EEQTPLHIASRLGKTEIVQLLLQHMAHPDA), 529–558 (NGYTPLHISAREGQVDVASVLLEAGAAHSL), 562–591 (KGFTPLHVAAKYGSLDVAKLLLQRRAAADS), 595–624 (NGLTPLHVAAHYDNQKVALLLLEKGASPHA), 628–657 (NGYTPLHIAAKKNQMQIASTLLNYGAETNI), 661–690 (QGVTPLHLASQEGHTDMVTLLLDKGANIHM), 694–723 (SGLTSLHLAAQEDKVNVADILTKHGADQDA), 727–756 (LGYTPLIVACHYGNVKMVNFLLKQGANVNA), 760–789 (NGYTPLHQAAQQGHTHIINVLLQHGAKPNA), and 793–822 (NGNTALAIAKRLGYISVVDTLKVVTEEVTT). A phosphoserine mark is found at Ser-31 and Ser-34. The residue at position 378 (Tyr-378) is a Phosphotyrosine. The residue at position 531 (Tyr-531) is a Phosphotyrosine. Ser-846 is subject to Phosphoserine. Thr-853 carries the phosphothreonine modification. Residue Ser-874 is modified to Phosphoserine. The segment at 966–1125 (SGFLVSFMVD…ELNEILNGMD (160 aa)) is interaction with SPTBN1. 2 consecutive ZU5 domains span residues 968-1156 (FLVS…VVSR) and 1158-1304 (KQDS…LIDC). Positions 1289-1423 (VSFTTNVSAR…FVKVRDTTQE (135 aa)) are UPA domain. The residue at position 1382 (Tyr-1382) is a Phosphotyrosine. One can recognise a Death 1 domain in the interval 1450–1535 (ITLPIYTKES…SDKAGSIKVK (86 aa)). The disordered stretch occupies residues 1457 to 1486 (KESESDQEQEEEIDMTSEKNDETESTETSV). 5 positions are modified to phosphoserine: Ser-1459, Ser-1461, Ser-1473, Ser-1500, and Ser-1596. The segment covering 1461 to 1471 (SDQEQEEEIDM) has biased composition (acidic residues). 7 disordered regions span residues 1670-2137 (AVGR…TDFS), 2197-2411 (ALDG…GLEL), 2430-2484 (AVSH…GIFP), 2507-2586 (SRLL…TPEE), 2604-2852 (EAKQ…SLPH), 2864-2904 (DISA…TDRF), and 2923-2951 (QITSPYENVPSQSFFSSEESKTQTDANHT). Composition is skewed to basic and acidic residues over residues 1674–1683 (SSEKEGKDIP) and 1711–1733 (KQKQKEEGLQASAEKAELKKGSS). 3 positions are modified to phosphoserine: Ser-1732, Ser-1733, and Ser-1736. The span at 1766-1783 (IKDKVKALQKRVEDEQKG) shows a compositional bias: basic and acidic residues. 7 Repeat A repeats span residues 1806-1817 (HPAASPSLKSER), 1818-1829 (HAPGSPSPKTER), 1830-1841 (HSTLSSSAKTER), 1842-1853 (HPPVSPSSKTEK), 1854-1865 (HSPVSPSAKTER), 1866-1877 (HSPASSSSKTEK), and 1878-1889 (HSPVSPSTKTER). The interval 1806 to 1983 (HPAASPSLKS…PVSPTSKTER (178 aa)) is repeat-rich region. Ser-1855 and Ser-1858 each carry phosphoserine. Basic and acidic residues-rich tracts occupy residues 1886–1902 (KTERHSPVSSTKTERHP) and 1921–1937 (RTEKHPPVSPGRTEKRL). A Repeat A; approximate repeat occupies 1890–1900 (HSPVSSTKTER). Repeat A repeat units lie at residues 1901 to 1912 (HPPVSPSGKTDK) and 1913 to 1924 (RPPVSPSGRTEK). One copy of the Repeat A; approximate repeat lies at 1925–1935 (HPPVSPGRTEK). Position 1929 is a phosphoserine (Ser-1929). Repeat A repeat units follow at residues 1936–1947 (RLPVSPSGRTDK), 1948–1959 (HQPVSTAGKTEK), 1960–1971 (HLPVSPSGKTEK), and 1972–1983 (QPPVSPTSKTER). Basic and acidic residues-rich tracts occupy residues 1980 to 1994 (KTERIEETMSVRELM), 2003 to 2034 (PSKHKTGLFEHKSAKQKQPQEKGKVRVEKEKG), 2075 to 2093 (VKKEDAAGGKEKVLSHKIP), and 2102 to 2117 (EESHRESEVPKEKMAD). Residue Ser-2127 is modified to Phosphoserine. The span at 2128 to 2137 (PDRKTSTDFS) shows a compositional bias: basic and acidic residues. Phosphothreonine is present on Thr-2239. Positions 2240 to 2251 (PETSPESLSFSP) are enriched in polar residues. Phosphoserine is present on Ser-2243. The segment covering 2252–2282 (KKSEEQTGETKESTKTETTTEIRSEKEHPTT) has biased composition (basic and acidic residues). Position 2269 is a phosphothreonine (Thr-2269). A Phosphoserine modification is found at Ser-2275. Positions 2355–2376 (TFGSSAHKTQTDSEVQESTATS) are enriched in polar residues. A phosphoserine mark is found at Ser-2405, Ser-2440, Ser-2454, Ser-2516, and Ser-2521. Residues 2523 to 2545 (EQTSLMESSGKSPLSPDTPSSEE) show a composition bias toward polar residues. Composition is skewed to basic and acidic residues over residues 2576–2586 (NGEKKRFTPEE) and 2604–2619 (EAKQKRDYKKEPKQEE). A Phosphothreonine modification is found at Thr-2583. Ser-2679 and Ser-2701 each carry phosphoserine. The segment covering 2696-2705 (PSSMDSNSSP) has biased composition (low complexity). Over residues 2729-2776 (EPGKSEEEKDSESHLAEDRHAVSTEAEDRSYDKLNRDTDQPKICDGHG) the composition is skewed to basic and acidic residues. Residues Ser-2781 and Ser-2795 each carry the phosphoserine modification. Positions 2781-2791 (SPSSSAAPVSS) are enriched in low complexity. A compositionally biased stretch (polar residues) spans 2892–2903 (SQDSSITTQTDR). Ser-2956 bears the Phosphoserine mark. Disordered stretches follow at residues 2987–3016 (NFEGQDIKMESQQESTLWEMQSDSVSSSFE), 3069–3099 (LMVDRQSQGTTPDTTPARTPTEEGTPTSEQN), and 3136–3462 (QESR…PTKE). Residues 2998–3016 (QQESTLWEMQSDSVSSSFE) show a composition bias toward polar residues. A Phosphoserine modification is found at Ser-3075. Phosphothreonine is present on Thr-3078. Positions 3078 to 3087 (TTPDTTPART) are enriched in low complexity. Over residues 3090–3099 (EEGTPTSEQN) the composition is skewed to polar residues. Residues 3137–3149 (ESREETLSEDVKE) show a composition bias toward basic and acidic residues. A compositionally biased stretch (low complexity) spans 3157–3169 (LPLETSAESLALS). Over residues 3175-3194 (VDDEADLLPDDVSEEVEEIP) the composition is skewed to acidic residues. Polar residues-rich tracts occupy residues 3198–3212 (AQLNSQMGISASTET) and 3256–3265 (LDFSTLTRSV). Phosphoserine is present on residues Ser-3273, Ser-3276, and Ser-3277. Residues 3335–3344 (EENKADEAKP) are compositionally biased toward basic and acidic residues. A compositionally biased stretch (polar residues) spans 3357 to 3374 (VEQQLSDLDTSVQKTVAP). Phosphoserine occurs at positions 3390 and 3409. Basic and acidic residues predominate over residues 3409-3423 (SYTETETESRERAEE). Low complexity predominate over residues 3446–3460 (SRSTTSSCRGGTSPT). Ser-3474 carries the post-translational modification Phosphoserine. The 85-residue stretch at 3569–3653 (IEERLAYIAD…DIVHLMETNT (85 aa)) folds into the Death 2 domain. The residue at position 3735 (Ser-3735) is a Phosphoserine. Residues Thr-3776, Thr-3797, Thr-3803, and Thr-3814 each carry the phosphothreonine modification. The disordered stretch occupies residues 3777–3858 (PGTETSETQK…VESADNQPET (82 aa)). Ser-3823 is subject to Phosphoserine. Basic and acidic residues predominate over residues 3832–3841 (PSEHREESSP). Ser-3909 carries the post-translational modification Phosphoserine.

As to quaternary structure, interacts with RHBG and SPTBN1. Colocalizes with Na/K ATPase, Na/Ca exchanger and SPTBN1. Directly interacts with DMD; this interaction is necessary for DMD localization at the sarcolemma. Interacts with DCTN4; this interaction is required for DCTN4 retention at costameres. Identified in complexes that contain VIM, EZR, AHNAK, BFSP1, BFSP2, ANK2, PLEC, PRX and spectrin. Interacts (via death domain) with RABGAP1L (via Rab-GAP TBC domain). Post-translationally, phosphorylated at multiple sites by different protein kinases and each phosphorylation event regulates the protein's structure and function. Present in plasma membrane of neurons as well as glial cells throughout the brain. Expressed in fetal brain and in temporal cortex of adult brain. Also expressed in the inner segments of rod photoreceptors in retina.

Its subcellular location is the cytoplasm. It is found in the cytoskeleton. The protein localises to the membrane. It localises to the myofibril. The protein resides in the sarcomere. Its subcellular location is the m line. It is found in the apical cell membrane. The protein localises to the cell membrane. It localises to the postsynaptic cell membrane. The protein resides in the early endosome. Its subcellular location is the recycling endosome. It is found in the lysosome. The protein localises to the mitochondrion. It localises to the z line. The protein resides in the sarcolemma. Its subcellular location is the T-tubule. Plays an essential role in the localization and membrane stabilization of ion transporters and ion channels in several cell types, including cardiomyocytes, as well as in striated muscle cells. In skeletal muscle, required for proper localization of DMD and DCTN4 and for the formation and/or stability of a special subset of microtubules associated with costameres and neuromuscular junctions. In cardiomyocytes, required for coordinate assembly of Na/Ca exchanger, SLC8A1/NCX1, Na/K ATPases ATP1A1 and ATP1A2 and inositol 1,4,5-trisphosphate (InsP3) receptors at sarcoplasmic reticulum/sarcolemma sites. Required for expression and targeting of SPTBN1 in neonatal cardiomyocytes and for the regulation of neonatal cardiomyocyte contraction rate. In the inner segment of rod photoreceptors, required for the coordinated expression of the Na/K ATPase, Na/Ca exchanger and beta-2-spectrin (SPTBN1). Plays a role in endocytosis and intracellular protein transport. Associates with phosphatidylinositol 3-phosphate (PI3P)-positive organelles and binds dynactin to promote long-range motility of cells. Recruits RABGAP1L to (PI3P)-positive early endosomes, where RABGAP1L inactivates RAB22A, and promotes polarized trafficking to the leading edge of the migrating cells. Part of the ANK2/RABGAP1L complex which is required for the polarized recycling of fibronectin receptor ITGA5 ITGB1 to the plasma membrane that enables continuous directional cell migration. This is Ankyrin-2 (ANK2) from Homo sapiens (Human).